Here is a 436-residue protein sequence, read N- to C-terminus: ATP-dependent protease ATPase subunit HslU (436 aa).

ATP contacts are provided by residues isoleucine 19, 61–66 (GVGKTE), aspartate 249, glutamate 314, and arginine 386.

Belongs to the ClpX chaperone family. HslU subfamily. As to quaternary structure, a double ring-shaped homohexamer of HslV is capped on each side by a ring-shaped HslU homohexamer. The assembly of the HslU/HslV complex is dependent on binding of ATP.

Its subcellular location is the cytoplasm. In terms of biological role, ATPase subunit of a proteasome-like degradation complex; this subunit has chaperone activity. The binding of ATP and its subsequent hydrolysis by HslU are essential for unfolding of protein substrates subsequently hydrolyzed by HslV. HslU recognizes the N-terminal part of its protein substrates and unfolds these before they are guided to HslV for hydrolysis. In Bartonella bacilliformis (strain ATCC 35685 / KC583 / Herrer 020/F12,63), this protein is ATP-dependent protease ATPase subunit HslU.